The following is a 327-amino-acid chain: Succinylglutamate desuccinylase (327 aa).

His53, Glu56, and His146 together coordinate Zn(2+). Residue Glu209 is part of the active site.

It belongs to the AspA/AstE family. Succinylglutamate desuccinylase subfamily. Requires Zn(2+) as cofactor.

It carries out the reaction N-succinyl-L-glutamate + H2O = L-glutamate + succinate. It participates in amino-acid degradation; L-arginine degradation via AST pathway; L-glutamate and succinate from L-arginine: step 5/5. Transforms N(2)-succinylglutamate into succinate and glutamate. This is Succinylglutamate desuccinylase from Serratia proteamaculans (strain 568).